The following is a 195-amino-acid chain: Protein GrpE (195 aa).

A disordered region spans residues 1 to 60; the sequence is MAKDEEKNSQASAAPNEGEVKAKQEQTSAKEPAAKAGETEKVADLQKQVEELTKQLDDQK. A compositionally biased stretch (basic and acidic residues) spans 37-60; sequence GETEKVADLQKQVEELTKQLDDQK.

It belongs to the GrpE family. In terms of assembly, homodimer.

The protein resides in the cytoplasm. Functionally, participates actively in the response to hyperosmotic and heat shock by preventing the aggregation of stress-denatured proteins, in association with DnaK and GrpE. It is the nucleotide exchange factor for DnaK and may function as a thermosensor. Unfolded proteins bind initially to DnaJ; upon interaction with the DnaJ-bound protein, DnaK hydrolyzes its bound ATP, resulting in the formation of a stable complex. GrpE releases ADP from DnaK; ATP binding to DnaK triggers the release of the substrate protein, thus completing the reaction cycle. Several rounds of ATP-dependent interactions between DnaJ, DnaK and GrpE are required for fully efficient folding. This chain is Protein GrpE, found in Limosilactobacillus fermentum (strain NBRC 3956 / LMG 18251) (Lactobacillus fermentum).